We begin with the raw amino-acid sequence, 353 residues long: Carbamoyl phosphate synthase small chain (353 aa).

Residues 1–166 (MSDAYLALET…AETHGNGDTT (166 aa)) are CPSase. Ser-45, Gly-214, and Gly-216 together coordinate L-glutamine. The Glutamine amidotransferase type-1 domain occupies 166 to 349 (TVALVDCGAK…LAMADASYTP (184 aa)). The active-site Nucleophile is Cys-241. Residues Leu-242, Gln-245, Asn-283, Gly-285, and Tyr-286 each coordinate L-glutamine. Active-site residues include His-322 and Glu-324.

This sequence belongs to the CarA family. In terms of assembly, composed of two chains; the small (or glutamine) chain promotes the hydrolysis of glutamine to ammonia, which is used by the large (or ammonia) chain to synthesize carbamoyl phosphate. Tetramer of heterodimers (alpha,beta)4.

It catalyses the reaction hydrogencarbonate + L-glutamine + 2 ATP + H2O = carbamoyl phosphate + L-glutamate + 2 ADP + phosphate + 2 H(+). It carries out the reaction L-glutamine + H2O = L-glutamate + NH4(+). Its pathway is amino-acid biosynthesis; L-arginine biosynthesis; carbamoyl phosphate from bicarbonate: step 1/1. The protein operates within pyrimidine metabolism; UMP biosynthesis via de novo pathway; (S)-dihydroorotate from bicarbonate: step 1/3. Functionally, small subunit of the glutamine-dependent carbamoyl phosphate synthetase (CPSase). CPSase catalyzes the formation of carbamoyl phosphate from the ammonia moiety of glutamine, carbonate, and phosphate donated by ATP, constituting the first step of 2 biosynthetic pathways, one leading to arginine and/or urea and the other to pyrimidine nucleotides. The small subunit (glutamine amidotransferase) binds and cleaves glutamine to supply the large subunit with the substrate ammonia. This Halobacterium salinarum (strain ATCC 29341 / DSM 671 / R1) protein is Carbamoyl phosphate synthase small chain.